Consider the following 350-residue polypeptide: MNTRTDVTNDNIDKNPTKRGDKNIPGRNERFNDQNRFNNDIPKPKPRLQPNQPPKQDNKCREENGDFINIRLCAYEKEYCNDGYLSPAYYMLKQVDDEEMSCWSELSSLVRSRKAVGFPLLKAAKRISHGSMLYFEQFKNSKVVRLTPQVKCLNDTVIFQTVVILYSMYKRGIYSNEFCFDLVSIPRTNIVFSVNQLMFNICTDILVVLSICGNRLYRTNLPQSCYLNFIHGHETIARRGYEHSNYFFEWLIKNHISLLTKQTMDILKVKKKYAIGAPVNRLLEPGTLVYVPKEDYYFIGISLTDVSISDNVRVLFSTDGIVLEIEDFNIKHLFMAGEMFVRSQSSTIIV.

The span at 1–10 (MNTRTDVTND) shows a compositional bias: polar residues. The interval 1-61 (MNTRTDVTND…QPPKQDNKCR (61 aa)) is disordered. The segment covering 11–33 (NIDKNPTKRGDKNIPGRNERFND) has biased composition (basic and acidic residues).

The protein belongs to the orthopoxvirus OPG097 family.

Its subcellular location is the virion. The protein localises to the host cytoplasm. Might be required to be present in the virion for transcription of early genes after primo infection. This chain is Protein OPG097 (OPG097), found in Bos taurus (Bovine).